A 305-amino-acid chain; its full sequence is Probable xyloglucan endotransglucosylase/hydrolase protein 8 (305 aa).

A signal peptide spans 1 to 31 (METERRIITSCSAMTALFLFMTALMASSSIA). Positions 32-231 (ATPTQSFEDN…WKKAPFVSSY (200 aa)) constitute a GH16 domain. N-linked (GlcNAc...) asparagine glycans are attached at residues asparagine 61 and asparagine 66. The active-site Nucleophile is glutamate 115. The Proton donor role is filled by glutamate 119. Glutamate 119 contacts xyloglucan. N-linked (GlcNAc...) asparagine glycosylation occurs at asparagine 123. 132–134 (QTN) lines the xyloglucan pocket. N-linked (GlcNAc...) asparagine glycosylation occurs at asparagine 138. Residues 142 to 144 (NRE), 210 to 211 (DW), and glycine 215 each bind xyloglucan. Cystine bridges form between cysteine 239/cysteine 248 and cysteine 286/cysteine 299. Arginine 291 contacts xyloglucan.

It belongs to the glycosyl hydrolase 16 family. XTH group 1 subfamily. In terms of processing, contains at least one intrachain disulfide bond essential for its enzymatic activity.

Its subcellular location is the secreted. It is found in the cell wall. The protein resides in the extracellular space. The protein localises to the apoplast. The catalysed reaction is breaks a beta-(1-&gt;4) bond in the backbone of a xyloglucan and transfers the xyloglucanyl segment on to O-4 of the non-reducing terminal glucose residue of an acceptor, which can be a xyloglucan or an oligosaccharide of xyloglucan.. Catalyzes xyloglucan endohydrolysis (XEH) and/or endotransglycosylation (XET). Cleaves and religates xyloglucan polymers, an essential constituent of the primary cell wall, and thereby participates in cell wall construction of growing tissues. The protein is Probable xyloglucan endotransglucosylase/hydrolase protein 8 (XTH8) of Arabidopsis thaliana (Mouse-ear cress).